The following is a 382-amino-acid chain: Beta-lactamase CMY-1 (382 aa).

Positions 1–23 (MQQRQSILWGAVATLMWAGLAHA) are cleaved as a signal peptide. The active-site Acyl-ester intermediate is the S88. Residues S88, Q144, Y174, N176, and N363 each contribute to the a beta-lactam site.

Belongs to the class-C beta-lactamase family.

The catalysed reaction is a beta-lactam + H2O = a substituted beta-amino acid. Inhibited by the beta-lactamase-blocking agent sulbactam. In terms of biological role, class C beta-lactamase which confers resistance to penicillins and cephalosporins. Has benzylpenicillin- and cefalotin-hydrolyzing activities. Has weak cefuroxime, cefotaxime, cefoxitin, imipenem and oxacillin-hydrolyzing activities. In Klebsiella pneumoniae, this protein is Beta-lactamase CMY-1.